The chain runs to 191 residues: Ion-translocating oxidoreductase complex subunit B (191 aa).

The hydrophobic stretch occupies residues 1–26 (MSLVLVAVLALLGLCLIAGAILGFAA). The region spanning 32–90 (EGDPIAEQINALLPQTQCGQCGYPGCKPYAEAIAGGDKINKCPPGGEATIQALADLLDV) is the 4Fe-4S domain. Positions 49, 52, 57, 73, 114, 117, 120, 124, 144, 147, 150, and 154 each coordinate [4Fe-4S] cluster. 4Fe-4S ferredoxin-type domains lie at 105-134 (MVAF…GAAR) and 135-164 (QMHT…MIEV).

This sequence belongs to the 4Fe4S bacterial-type ferredoxin family. RnfB subfamily. As to quaternary structure, the complex is composed of six subunits: RnfA, RnfB, RnfC, RnfD, RnfE and RnfG. [4Fe-4S] cluster serves as cofactor.

Its subcellular location is the cell inner membrane. In terms of biological role, part of a membrane-bound complex that couples electron transfer with translocation of ions across the membrane. This chain is Ion-translocating oxidoreductase complex subunit B, found in Ectopseudomonas mendocina (strain ymp) (Pseudomonas mendocina).